The sequence spans 142 residues: MVLSAADKSNVQAAWGKVGGHAADYGAEALERMFLSFPTTKTYFPHFDLSHGSAQVKGHGAKVAAALTKAVGHLDDLPGALSELSDLHAHKLRVDPVNFKLLSHSLLVTLASHLPNDFTPAVHASLDKFFANVSTVLTSKYR.

Residues 2–142 form the Globin domain; it reads VLSAADKSNV…VSTVLTSKYR (141 aa). Histidine 59 serves as a coordination point for O2. Histidine 88 is a heme b binding site.

Belongs to the globin family. Heterotetramer of two alpha chains and two beta chains. Red blood cells.

Functionally, involved in oxygen transport from the lung to the various peripheral tissues. The sequence is that of Hemoglobin subunit alpha-3 from Bubalus bubalis (Domestic water buffalo).